The following is a 199-amino-acid chain: Protein CPL1 (199 aa).

Positions 1–30 (MFSIPPSVRRLVFLFLIAAPLLSIVLPVAA) are cleaved as a signal peptide. The interval 34–58 (GVDPPSKLQPRAPQPSRRMGATKRS) is disordered. Asn-148 is a glycosylation site (N-linked (GlcNAc...) asparagine).

It localises to the secreted. Virulence factor which promotes fungal virulence by enhancing type 2 inflammation in the mouse host. Likely binds mouse Tlr4 independently of Ly96/Md2 and activates Tlr4 signaling to drive Stat3 phosphorylation in interstitial macrophages, which promotes the initial induction of Arg1/arginase-1 and increases macrophage sensitivity to Il4 signaling. The polypeptide is Protein CPL1 (Cryptococcus neoformans var. grubii serotype A (strain H99 / ATCC 208821 / CBS 10515 / FGSC 9487) (Filobasidiella neoformans var. grubii)).